A 114-amino-acid polypeptide reads, in one-letter code: Iron-sulfur cluster insertion protein ErpA (114 aa).

Iron-sulfur cluster-binding residues include C42, C106, and C108.

It belongs to the HesB/IscA family. Homodimer. Iron-sulfur cluster is required as a cofactor.

Functionally, required for insertion of 4Fe-4S clusters for at least IspG. This is Iron-sulfur cluster insertion protein ErpA from Hamiltonella defensa subsp. Acyrthosiphon pisum (strain 5AT).